The chain runs to 320 residues: ATP-dependent 6-phosphofructokinase (320 aa).

Glycine 11 lines the ATP pocket. Residue 21–25 coordinates ADP; sequence RAVVR. ATP contacts are provided by residues 72–73 and 102–105; these read RC and GDGS. Aspartate 103 lines the Mg(2+) pocket. Residue 125–127 participates in substrate binding; that stretch reads TID. Aspartate 127 acts as the Proton acceptor in catalysis. Residue arginine 154 participates in ADP binding. Substrate is bound by residues arginine 162 and 169 to 171; that span reads MGR. ADP is bound by residues 185–187 and 214–216; these read GAE and KTH. Residues glutamate 223, arginine 244, and 250 to 253 contribute to the substrate site; that span reads HIQR.

This sequence belongs to the phosphofructokinase type A (PFKA) family. ATP-dependent PFK group I subfamily. Prokaryotic clade 'B1' sub-subfamily. Homotetramer. Requires Mg(2+) as cofactor.

It localises to the cytoplasm. It catalyses the reaction beta-D-fructose 6-phosphate + ATP = beta-D-fructose 1,6-bisphosphate + ADP + H(+). It functions in the pathway carbohydrate degradation; glycolysis; D-glyceraldehyde 3-phosphate and glycerone phosphate from D-glucose: step 3/4. Its activity is regulated as follows. Allosterically activated by ADP and other diphosphonucleosides, and allosterically inhibited by phosphoenolpyruvate. In terms of biological role, catalyzes the phosphorylation of D-fructose 6-phosphate to fructose 1,6-bisphosphate by ATP, the first committing step of glycolysis. The sequence is that of ATP-dependent 6-phosphofructokinase from Clostridium botulinum (strain Eklund 17B / Type B).